A 517-amino-acid chain; its full sequence is Retrotransposon-like protein 1 (517 aa).

2 disordered regions span residues 1–29 (MEVNEGQDTEGGSSRAQTLTPPPNPQQQL) and 142–161 (EEERDKRKKEEQFREADARS).

The chain is Retrotransposon-like protein 1 (retr-1) from Caenorhabditis elegans.